The following is a 20-amino-acid chain: Antimicrobial peptide EP-20 (20 aa).

Residues 1–20 (EGPVGLADPDGPASAPLGAP) are disordered.

It is found in the secreted. Its function is as follows. The synthetic peptide inhibits growth of fungus P.capsici and partially that of V.dahliae, F.graminearum and F.omysporum. The protein is Antimicrobial peptide EP-20 of Xenorhabdus budapestensis.